The primary structure comprises 505 residues: ATP synthase subunit alpha (505 aa).

170–177 (GDRQTGKS) serves as a coordination point for ATP.

The protein belongs to the ATPase alpha/beta chains family. In terms of assembly, F-type ATPases have 2 components, CF(1) - the catalytic core - and CF(0) - the membrane proton channel. CF(1) has five subunits: alpha(3), beta(3), gamma(1), delta(1), epsilon(1). CF(0) has four main subunits: a(1), b(1), b'(1) and c(9-12).

It localises to the cellular thylakoid membrane. It carries out the reaction ATP + H2O + 4 H(+)(in) = ADP + phosphate + 5 H(+)(out). Its function is as follows. Produces ATP from ADP in the presence of a proton gradient across the membrane. The alpha chain is a regulatory subunit. The polypeptide is ATP synthase subunit alpha (Prochlorococcus marinus (strain MIT 9312)).